A 154-amino-acid polypeptide reads, in one-letter code: Large ribosomal subunit protein uL13 (154 aa).

Belongs to the universal ribosomal protein uL13 family. As to quaternary structure, part of the 50S ribosomal subunit.

This protein is one of the early assembly proteins of the 50S ribosomal subunit, although it is not seen to bind rRNA by itself. It is important during the early stages of 50S assembly. The protein is Large ribosomal subunit protein uL13 of Bradyrhizobium diazoefficiens (strain JCM 10833 / BCRC 13528 / IAM 13628 / NBRC 14792 / USDA 110).